Consider the following 130-residue polypeptide: Large ribosomal subunit protein bL21 (130 aa).

The segment at 110-130 is disordered; it reads KTAAQPAADEAVAANEVDSEA. The segment covering 112-130 has biased composition (low complexity); that stretch reads AAQPAADEAVAANEVDSEA.

The protein belongs to the bacterial ribosomal protein bL21 family. As to quaternary structure, part of the 50S ribosomal subunit. Contacts protein L20.

This protein binds to 23S rRNA in the presence of protein L20. This Cyanothece sp. (strain PCC 7425 / ATCC 29141) protein is Large ribosomal subunit protein bL21.